A 292-amino-acid chain; its full sequence is Polyketide transferase af380 (292 aa).

Positions 46-267 are abhydrolase domain; the sequence is DVAVWFQQQG…FDLVAGRGHM (222 aa).

It belongs to the polyketide transferase af380 family.

The enzyme catalyses fumagillol + dodecapentaneoyl-[polyketide synthase] = prefumagillin + holo-[polyketide synthase]. It participates in secondary metabolite biosynthesis; terpenoid biosynthesis. Its function is as follows. Polyketide transferase; part of the gene cluster that mediates the biosynthesis of fumagillin, a meroterpenoid that has numerous biological activities including irreversible inhibition of human type 2 methionine aminopeptidase (METAP2). Within the pathway, the polyketide transferase af380 catalyzes the transfer of a dodecapentaenoyl group synthesized by the polyketide synthase af370 onto 5R-hydroxy-seco-sesquiterpene to produce prefumagillin. The pathway begins with the conversion of farnesyl pyrophosphate (FPP) to beta-trans-bergamotene by the membrane-bound beta-trans-bergamotene synthase af520. The multifunctional cytochrome P450 monooxygenase af510 then converts beta-trans-bergamotene into 5-keto-demethoxyfumagillol via several oxydation steps. 5-keto-demethoxyfumagillol is then subjected to successive C-6 hydroxylation and O-methylation by the dioxygenase af480 and O-methyltransferase af390-400, respectively, to yield 5-keto-fumagillol, which is then stereoselectively reduced by the keto-reductase af490 to 5R-hydroxy-seco-sesquiterpene. The next step is the polyketide transferase af380-catalyzed transfer of a dodecapentaenoyl group synthesized by the polyketide synthase af370 onto 5R-hydroxy-seco-sesquiterpene which leads to the production of prefumagillin. Finally, oxidative cleavage by the monooxygenase af470 converts prefumagillin to fumagillin. The polypeptide is Polyketide transferase af380 (Aspergillus fumigatus (strain ATCC MYA-4609 / CBS 101355 / FGSC A1100 / Af293) (Neosartorya fumigata)).